The chain runs to 421 residues: WD repeat and SOCS box-containing protein 1 (421 aa).

6 WD repeats span residues 32–71, 124–165, 168–208, 212–251, 254–293, and 309–346; these read KCGR…QNFL, SRCV…LLLN, DHTE…NMMK, GHQN…MIRK, GHHH…ILME, and ANDR…DYPV. An SOCS box domain is found at 372 to 421; that stretch reads DGSVYFWATPRQVPSLQHLCRMSIRRVMPTQEVQELPIPSKLLEFLSYRI.

Interacts with DIO2. Component of the probable ECS(WSB1) E3 ubiquitin ligase complex which contains CUL5, RNF7/RBX2, Elongin BC complex and WSB1. Component of a probable ECS-like E3 ubiquitin-protein ligase complex which contains CUL5, RBX1, Elongin BC complex and WSB1. Interacts with CUL5, RNF7, ELOB and ELOC. Binds to HIPK2 through WD40 repeats.

Its pathway is protein modification; protein ubiquitination. In terms of biological role, probable substrate-recognition component of a SCF-like ECS (Elongin-Cullin-SOCS-box protein) E3 ubiquitin ligase complex which mediates the ubiquitination and subsequent proteasomal degradation of target proteins. Recognizes type II iodothyronine deiodinase/DIO2. Confers constitutive instability to HIPK2 through proteasomal degradation. The chain is WD repeat and SOCS box-containing protein 1 (WSB1) from Homo sapiens (Human).